Here is a 78-residue protein sequence, read N- to C-terminus: Large ribosomal subunit protein bL28 (78 aa).

Positions 1–22 (MSRVCQVTGKRPMSGNNRSHAM) are disordered.

This sequence belongs to the bacterial ribosomal protein bL28 family.

The sequence is that of Large ribosomal subunit protein bL28 from Yersinia pseudotuberculosis serotype O:1b (strain IP 31758).